The chain runs to 264 residues: 3-methyl-2-oxobutanoate hydroxymethyltransferase (264 aa).

The Mg(2+) site is built by Asp-45 and Asp-84. Residues 45 to 46 (DS), Asp-84, and Lys-112 each bind 3-methyl-2-oxobutanoate. Position 114 (Glu-114) interacts with Mg(2+). Glu-181 functions as the Proton acceptor in the catalytic mechanism.

This sequence belongs to the PanB family. Homodecamer; pentamer of dimers. Mg(2+) is required as a cofactor.

It localises to the cytoplasm. The enzyme catalyses 3-methyl-2-oxobutanoate + (6R)-5,10-methylene-5,6,7,8-tetrahydrofolate + H2O = 2-dehydropantoate + (6S)-5,6,7,8-tetrahydrofolate. Its pathway is cofactor biosynthesis; (R)-pantothenate biosynthesis; (R)-pantoate from 3-methyl-2-oxobutanoate: step 1/2. Its function is as follows. Catalyzes the reversible reaction in which hydroxymethyl group from 5,10-methylenetetrahydrofolate is transferred onto alpha-ketoisovalerate to form ketopantoate. This chain is 3-methyl-2-oxobutanoate hydroxymethyltransferase, found in Escherichia coli O7:K1 (strain IAI39 / ExPEC).